A 989-amino-acid chain; its full sequence is Cellulose synthase A catalytic subunit 4 [UDP-forming] (989 aa).

At 1 to 184 (MMESGVPPCA…SRIIPISKNK (184 aa)) the chain is on the cytoplasmic side. Zn(2+) contacts are provided by C9, C12, C20, C23, C28, C31, C43, and C46. The RING-type; degenerate zinc finger occupies 9–47 (CAACGDDAHAACRACSYALCKACLDEDAAEGRTTCARCG). Positions 138-149 (KKEKKASAKKAA) are enriched in basic residues. The tract at residues 138–158 (KKEKKASAKKAAAKAQAPPVE) is disordered. A helical transmembrane segment spans residues 185–205 (LTPYRAVIIMRLVVLGLFFHY). The Extracellular segment spans residues 206 to 213 (RITNPVYS). A helical transmembrane segment spans residues 214 to 234 (AFGLWMTSVICEIWFGFSWIL). At 235–772 (DQFPKWCPIN…INTIVYPFTS (538 aa)) the chain is on the cytoplasmic side. Residues S272, K278, E279, and D308 each contribute to the UDP-alpha-D-glucose site. Residue D308 is part of the active site. Residues 362-389 (VKERRAMKRDYEEYKVRINALVAKAQKT) are a coiled coil. K449 contributes to the UDP-alpha-D-glucose binding site. Mn(2+)-binding residues include K450 and D474. The active site involves D688. The helical transmembrane segment at 773-793 (LPLIAYCCLPAICLLTGKFII) threads the bilayer. Topologically, residues 794–798 (PTLSN) are extracellular. A helical membrane pass occupies residues 799-819 (AATIWFLGLFISIIVTSVLEL). The Cytoplasmic portion of the chain corresponds to 820 to 835 (RWSGIGIEDWWRNEQF). Residues 836–856 (WVIGGVSAHLFAVFQGILKMI) traverse the membrane as a helical segment. The Extracellular portion of the chain corresponds to 857–884 (AGLDTNFTVTAKATDDTEFGELYVFKWT). N862 carries N-linked (GlcNAc...) asparagine glycosylation. A helical transmembrane segment spans residues 885–905 (TVLIPPTSILVLNLVGVVAGF). Residues 906-916 (SDALNSGYESW) lie on the Cytoplasmic side of the membrane. A helical transmembrane segment spans residues 917–937 (GPLFGKVFFAMWVIMHLYPFL). The Extracellular segment spans residues 938-946 (KGLMGRQNR). A helical transmembrane segment spans residues 947-967 (TPTIVVLWSVLLASVFSLLWV). Topologically, residues 968–989 (KIDPFIGSSETTTTNSCANFDC) are cytoplasmic.

Belongs to the glycosyltransferase 2 family. Plant cellulose synthase subfamily. The cofactor is Mn(2+). It depends on Zn(2+) as a cofactor.

The protein localises to the cell membrane. It catalyses the reaction [(1-&gt;4)-beta-D-glucosyl](n) + UDP-alpha-D-glucose = [(1-&gt;4)-beta-D-glucosyl](n+1) + UDP + H(+). It participates in glycan metabolism; plant cellulose biosynthesis. In terms of biological role, catalytic subunit of cellulose synthase terminal complexes ('rosettes'), required for beta-1,4-glucan microfibril crystallization, a major mechanism of the cell wall formation. Involved in the secondary cell wall formation. The protein is Cellulose synthase A catalytic subunit 4 [UDP-forming] (CESA4) of Oryza sativa subsp. indica (Rice).